A 262-amino-acid polypeptide reads, in one-letter code: Acetylglutamate kinase (262 aa).

Residues 48–49 (GG), R70, and N162 contribute to the substrate site.

The protein belongs to the acetylglutamate kinase family. ArgB subfamily.

The protein resides in the cytoplasm. The enzyme catalyses N-acetyl-L-glutamate + ATP = N-acetyl-L-glutamyl 5-phosphate + ADP. It functions in the pathway amino-acid biosynthesis; L-arginine biosynthesis; N(2)-acetyl-L-ornithine from L-glutamate: step 2/4. Catalyzes the ATP-dependent phosphorylation of N-acetyl-L-glutamate. This Vibrio cholerae serotype O1 (strain ATCC 39541 / Classical Ogawa 395 / O395) protein is Acetylglutamate kinase.